A 252-amino-acid polypeptide reads, in one-letter code: MFKKLFRQDENILNSELAEDLPIPRHVAIIMDGNGRWAKKRFLPRIAGHKEGMDVVKRVTRYANAIGIDVLTLYAFSTENWKRPTDEVDFLMKLPVEFFDSFVPELIEENVRVNVMGYRENLPNHTMRAVEKAIADTAHCTGLTLNFALNYGGRSEIITAAKEAMKELELEGKSADDLTEEKLNDHLMSSGLGDPDLLIRTSGELRLSNFMLWQLAYSEFYFTDTHWPDFSKEDFLQAIIEYQNRSRRFGGL.

Asp-32 is an active-site residue. Residue Asp-32 participates in Mg(2+) binding. Substrate is bound by residues 33–36 (GNGR), Trp-37, Arg-45, His-49, and 77–79 (STE). Asn-80 functions as the Proton acceptor in the catalytic mechanism. Substrate contacts are provided by residues Trp-81, Arg-83, Arg-200, and 206–208 (RLS). Glu-219 serves as a coordination point for Mg(2+).

Belongs to the UPP synthase family. Homodimer. The cofactor is Mg(2+).

In terms of biological role, catalyzes the condensation of isopentenyl diphosphate (IPP) with allylic pyrophosphates generating different type of terpenoids. The polypeptide is Isoprenyl transferase (Listeria monocytogenes serotype 4b (strain F2365)).